The following is a 311-amino-acid chain: Syndecan-1 (311 aa).

Positions 1-22 (MRRAALWLWLCALALRLQPALL) are cleaved as a signal peptide. The Extracellular portion of the chain corresponds to 23–255 (HSVAVNMPPE…GLLDRKEVLG (233 aa)). Disordered stretches follow at residues 31–85 (PEDQ…PDAI) and 141–244 (TMAP…TGAS). A compositionally biased stretch (acidic residues) spans 32–42 (EDQDGSGDDSD). The O-linked (Xyl...) (chondroitin sulfate) serine glycan is linked to serine 37. N-linked (GlcNAc...) asparagine glycosylation is present at asparagine 43. Residues serine 45 and serine 47 are each glycosylated (O-linked (Xyl...) (heparan sulfate) serine). Over residues 71–84 (TTTATAPEPTSPDA) the composition is skewed to low complexity. Composition is skewed to basic and acidic residues over residues 151-162 (PHRDVQPDHHET) and 169-180 (GRMEPHRPHVEE). O-linked (Xyl...) (chondroitin sulfate) serine glycans are attached at residues serine 204 and serine 214. Residues 215-226 (GENAAGAAGEPG) show a composition bias toward low complexity. The helical transmembrane segment at 256–276 (GVIAGGLVGLIFAVCLVGFML) threads the bilayer. The Cytoplasmic segment spans residues 277–311 (YRMKKKDEGSYSLEEPKQANGGAYQKPTKQEEFYA). The disordered stretch occupies residues 285–311 (GSYSLEEPKQANGGAYQKPTKQEEFYA). Serine 286 carries the phosphoserine modification.

The protein belongs to the syndecan proteoglycan family. As to quaternary structure, interacts with CDCP1. Interacts (via C-terminus) with TIAM1 (via PDZ domain). Interacts with MDK. Post-translationally, shedding is enhanced by a number of factors such as heparanase, thrombin or EGF. Also by stress and wound healing. PMA-mediated shedding is inhibited by TIMP3.

It localises to the membrane. The protein localises to the secreted. It is found in the extracellular exosome. Functionally, cell surface proteoglycan that contains both heparan sulfate and chondroitin sulfate and that links the cytoskeleton to the interstitial matrix. Regulates exosome biogenesis in concert with SDCBP and PDCD6IP. Able to induce its own expression in dental mesenchymal cells and also in the neighboring dental epithelial cells via an MSX1-mediated pathway. The chain is Syndecan-1 from Bos taurus (Bovine).